A 273-amino-acid polypeptide reads, in one-letter code: ATP synthase subunit a (273 aa).

Helical transmembrane passes span I41–F61, L101–L121, L122–V142, V143–I163, P183–S203, L221–P241, and I247–M267.

Belongs to the ATPase A chain family. F-type ATPases have 2 components, CF(1) - the catalytic core - and CF(0) - the membrane proton channel. CF(1) has five subunits: alpha(3), beta(3), gamma(1), delta(1), epsilon(1). CF(0) has three main subunits: a(1), b(2) and c(9-12). The alpha and beta chains form an alternating ring which encloses part of the gamma chain. CF(1) is attached to CF(0) by a central stalk formed by the gamma and epsilon chains, while a peripheral stalk is formed by the delta and b chains.

Its subcellular location is the cell membrane. Functionally, key component of the proton channel; it plays a direct role in the translocation of protons across the membrane. The sequence is that of ATP synthase subunit a from Baumannia cicadellinicola subsp. Homalodisca coagulata.